Reading from the N-terminus, the 703-residue chain is Ion-translocating oxidoreductase complex subunit C (703 aa).

4Fe-4S ferredoxin-type domains are found at residues 369-398 and 408-437; these read YDPQ…QQMY and KSNQ…IQYF. Positions 378, 381, 384, 388, 417, 420, 423, and 427 each coordinate [4Fe-4S] cluster. 2 disordered regions span residues 467 to 542 and 555 to 680; these read RLER…PDNS and RQQT…PKKA. Residues 485 to 497 are compositionally biased toward basic and acidic residues; sequence ARREELAANKGED. Residues 559–577 show a composition bias toward low complexity; it reads NGNSPVSSASNSDSATISA. The span at 578–592 shows a compositional bias: polar residues; sequence DNTHSTPKTAQNQTA. Low complexity-rich tracts occupy residues 598–629 and 641–669; these read AAVA…TEKT and AAVA…EKTA.

Belongs to the 4Fe4S bacterial-type ferredoxin family. RnfC subfamily. In terms of assembly, the complex is composed of six subunits: RnfA, RnfB, RnfC, RnfD, RnfE and RnfG. Requires [4Fe-4S] cluster as cofactor.

It is found in the cell inner membrane. In terms of biological role, part of a membrane-bound complex that couples electron transfer with translocation of ions across the membrane. This is Ion-translocating oxidoreductase complex subunit C from Actinobacillus succinogenes (strain ATCC 55618 / DSM 22257 / CCUG 43843 / 130Z).